The following is a 313-amino-acid chain: Formimidoylglutamase (313 aa).

Mn(2+) contacts are provided by histidine 130, aspartate 155, histidine 157, aspartate 159, aspartate 241, and aspartate 243.

It belongs to the arginase family. It depends on Mn(2+) as a cofactor.

It catalyses the reaction N-formimidoyl-L-glutamate + H2O = formamide + L-glutamate. The protein operates within amino-acid degradation; L-histidine degradation into L-glutamate; L-glutamate from N-formimidoyl-L-glutamate (hydrolase route): step 1/1. Catalyzes the conversion of N-formimidoyl-L-glutamate to L-glutamate and formamide. The chain is Formimidoylglutamase from Salmonella schwarzengrund (strain CVM19633).